The following is a 285-amino-acid chain: Neuralized-like protein 2 (285 aa).

A disordered region spans residues 1 to 20 (MAAASEPVDSGALWGLERPE). The NHR domain occupies 23 to 244 (PTRFHRVHGA…STKSVRLVQL (222 aa)). The SOCS box domain maps to 250–285 (SLQTLCRLVIQRSMVHRLAIDGLHLPKELKDFCKYE).

In terms of assembly, probable component the ECS(NEURL2) E3 ubiquitin-protein ligase complex consisting of ELOB/Elongin B, ELOC/Elongin C, CUL5, RBX1 and NEURL2. Interacts with CTNNB1. In terms of tissue distribution, expressed specifically in skeletal and cardiac muscles.

The protein localises to the cytoplasm. The protein operates within protein modification; protein ubiquitination. Plays an important role in the process of myofiber differentiation and maturation. Probable substrate-recognition component of a SCF-like ECS (Elongin BC-CUL2/5-SOCS-box protein) E3 ubiquitin-protein ligase complex, which mediates the ubiquitination of proteins. Probably contributes to catalysis through recognition and positioning of the substrate and the ubiquitin-conjugating enzyme. During myogenesis, controls the ubiquitination and degradation of the specific pool of CTNNB1/beta-catenin located at the sarcolemma. The chain is Neuralized-like protein 2 (NEURL2) from Homo sapiens (Human).